The chain runs to 555 residues: Poly(A) polymerase PAPa (555 aa).

The disordered stretch occupies residues 1–20 (MNNQAYGVTPPISVANSTPK). Residues 86 to 88 (FGS), 99 to 101 (DID), Asp153, Lys214, Tyr223, and 232 to 233 (GV) each bind ATP. Positions 99, 101, and 153 each coordinate Mg(2+). Residues 532–555 (KRKRAVSKNEGKKKPKSVGTVSAA) form a disordered region.

This sequence belongs to the poly(A) polymerase family. Mg(2+) serves as cofactor. Mn(2+) is required as a cofactor.

The protein localises to the nucleus. The catalysed reaction is RNA(n) + ATP = RNA(n)-3'-adenine ribonucleotide + diphosphate. In terms of biological role, polymerase that creates the 3'-poly(A) tail of mRNA's. May acquire specificity through interaction with a cleavage and polyadenylation factor. This Candida albicans (strain SC5314 / ATCC MYA-2876) (Yeast) protein is Poly(A) polymerase PAPa (PAPA).